The sequence spans 277 residues: Zinc transporter ZupT (277 aa).

The next 8 membrane-spanning stretches (helical) occupy residues 7–27 (VLLAFGLTLFAGLATGVGSAI), 38–58 (FLAVALGFSAGVMIYVSFVEI), 73–93 (VLASWYTVAAFFSGALLIAVI), 133–155 (AGVLAAVAIGIHNFPEGLAAFSA), 165–187 (AIAVAIAIHNIPEGMAVSVPIYY), 196–216 (FLYSFLSGVSEPIGALVGYVV), 220–240 (FFTPMVFGLLFASVAGIMVYI), and 257–277 (LCILGVFSGMGVMALSLLLFL). 2 residues coordinate Fe(2+): N145 and E148. E148 and H173 together coordinate Zn(2+). N174, E177, and E206 together coordinate Fe(2+). E177 contacts Zn(2+).

This sequence belongs to the ZIP transporter (TC 2.A.5) family. ZupT subfamily.

It localises to the cell inner membrane. It catalyses the reaction Zn(2+)(in) = Zn(2+)(out). In terms of biological role, mediates zinc uptake. May also transport other divalent cations. The sequence is that of Zinc transporter ZupT from Nitratidesulfovibrio vulgaris (strain ATCC 29579 / DSM 644 / CCUG 34227 / NCIMB 8303 / VKM B-1760 / Hildenborough) (Desulfovibrio vulgaris).